The following is a 307-amino-acid chain: Cytidine deaminase 7 (307 aa).

CMP/dCMP-type deaminase domains follow at residues 22–155 (TEPI…FTPD) and 185–307 (SDCS…FITE). Substrate is bound at residue 63–65 (NVE). Zn(2+) is bound at residue H76. E78 acts as the Proton donor in catalysis. Positions 111 and 114 each coordinate Zn(2+).

It belongs to the cytidine and deoxycytidylate deaminase family. Homodimer. Zn(2+) is required as a cofactor.

It carries out the reaction cytidine + H2O + H(+) = uridine + NH4(+). It catalyses the reaction 2'-deoxycytidine + H2O + H(+) = 2'-deoxyuridine + NH4(+). Its function is as follows. This enzyme scavenges exogenous and endogenous cytidine and 2'-deoxycytidine for UMP synthesis. The polypeptide is Cytidine deaminase 7 (CDA7) (Arabidopsis thaliana (Mouse-ear cress)).